Reading from the N-terminus, the 192-residue chain is uncharacterized protein (192 aa).

6 helical membrane passes run 5 to 22 (VPPL…GIGL), 42 to 61 (FLFL…HYVY), 66 to 88 (LRFL…SGKL), 101 to 118 (WGLL…ALNL), 122 to 139 (LVMW…STIL), and 159 to 181 (ALLL…LWLF).

It localises to the cell membrane. This is an uncharacterized protein from Treponema pallidum (strain Nichols).